Reading from the N-terminus, the 345-residue chain is Trace amine-associated receptor 6 (345 aa).

Residues 1–32 (MSSNSSLLVAVQLCYPNVNGSCVETLYSPGSR) are Extracellular-facing. N-linked (GlcNAc...) asparagine glycosylation is found at N4 and N19. Disulfide bonds link C22–C186 and C105–C190. A helical membrane pass occupies residues 33-53 (VILYIVFGFGAVLAVFGNLLV). Topologically, residues 54–68 (MISILHFKQLHSPTN) are cytoplasmic. Residues 69-89 (FLVASLACADFLVGVTVMPFS) traverse the membrane as a helical segment. Topologically, residues 90–107 (MVRTVESCWYFGRSFCTF) are extracellular. A helical transmembrane segment spans residues 108-128 (HTCCDVAFCYSSLFHLCFISI). At 129–147 (DRYIAVTDPLVYPTKFTVS) the chain is on the cytoplasmic side. A helical membrane pass occupies residues 148–168 (VSGICISVSWILPLMYSGAVF). Over 169 to 202 (YTGVYDDGLEELSDALNCIGGCQTVVNQNWVLID) the chain is Extracellular. The helical transmembrane segment at 203–223 (CLSFFIPTFIMIILYGNIFLV) threads the bilayer. The Cytoplasmic portion of the chain corresponds to 224–259 (ARRQAKKIENTGSKTESSSESYKARVARRERKAAKT). Residues 260–276 (LGVTVVAFMISWLPYSI) form a helical membrane-spanning segment. Residues 277–282 (DSLIDA) are Extracellular-facing. The helical transmembrane segment at 283-302 (FMGFITPAYIYEICCWCAYY) threads the bilayer. Residues 303 to 345 (NSAMNPLIYALFYPWFRKAIKVIVTGQVLKNSSATMNLFSEHI) lie on the Cytoplasmic side of the membrane.

It belongs to the G-protein coupled receptor 1 family.

It localises to the cell membrane. Its function is as follows. Olfactory receptor specific for trace amines, such as beta-phenylethylamine (beta-PEA). Trace amine compounds are enriched in animal body fluids and act on trace amine-associated receptors (TAARs) to elicit both intraspecific and interspecific innate behaviors. Beta-PEA-binding causes a conformation change that triggers signaling via G(s)-class of G alpha proteins (GNAL or GNAS). This is Trace amine-associated receptor 6 (TAAR6) from Pan troglodytes (Chimpanzee).